Here is a 196-residue protein sequence, read N- to C-terminus: Dimiconin (196 aa).

The signal sequence occupies residues 1–21 (MKTIIVVTIFGILTCAYPTDG). 2 N-linked (GlcNAc...) asparagine glycosylation sites follow: Asn62 and Asn187.

Belongs to the calycin superfamily. Triabin family. In terms of tissue distribution, salivary gland.

The protein resides in the secreted. Inhibits the intrinsic blood coagulation pathway by blocking the activation of host coagulation factor XII (F12) but not the enzymatic activity of activated F12. This Triatoma dimidiata (Kissing bug) protein is Dimiconin.